Consider the following 415-residue polypeptide: MLDHINELPDWISRGLDDLFPNDNSGDSDQSFLKRLELSSVDKKPLRVKLGIDPTGTDIHIGHSILFRKLRAFQDAGHTAILIIGDFTARIGDPTGKSKTRIQLSKDEVQSNALNYLEQLGLGKDPKDSLLDFSIPSRIEIRRNSEWLENLNLSKVIELLSNSTVGQMLAKEDFSNRYKSGTPISLHEFLYPLLQGYDSVAINSDVELGGTDQKFNIAMGRDLQKAFGQKPQFGMLLPILVGLDGARKMSKSLDNIVGINEDSLSMYSKLEKVPDDLVLTYLNLLTNENLKELSSNPREVQKFMALKVTSNFKGIEAAKNAQFNSEKLVLGTKDSLEEIPEASVSNVNFPAKAFYLFSKMEMCSSSSEARRQILGGGVRIDGKKIMDPNLEFHTPDDLIGKILQVGKKKFLRVST.

A 'HIGH' region motif is present at residues 54-63 (PTGTDIHIGH). The 'KMSKS' region motif lies at 248–252 (KMSKS). An ATP-binding site is contributed by Lys251. An S4 RNA-binding domain is found at 351-415 (AKAFYLFSKM…GKKKFLRVST (65 aa)).

It belongs to the class-I aminoacyl-tRNA synthetase family. TyrS type 2 subfamily. Homodimer.

The protein localises to the cytoplasm. The catalysed reaction is tRNA(Tyr) + L-tyrosine + ATP = L-tyrosyl-tRNA(Tyr) + AMP + diphosphate + H(+). In terms of biological role, catalyzes the attachment of tyrosine to tRNA(Tyr) in a two-step reaction: tyrosine is first activated by ATP to form Tyr-AMP and then transferred to the acceptor end of tRNA(Tyr). This Prochlorococcus marinus (strain NATL2A) protein is Tyrosine--tRNA ligase.